Reading from the N-terminus, the 130-residue chain is MAQVQYYGTGRRKSSVARVRLVPGEGRIVVNNREISEHIPSPALIEDIKQPLTLTETAGTYDVLVNVHGGGLSGQAGAIRHGIARALLEADPEYRATLKRAGLLTRDARMKERKKYGLKGARRAPQFSKR.

This sequence belongs to the universal ribosomal protein uS9 family.

This Bacillus velezensis (strain DSM 23117 / BGSC 10A6 / LMG 26770 / FZB42) (Bacillus amyloliquefaciens subsp. plantarum) protein is Small ribosomal subunit protein uS9.